A 535-amino-acid polypeptide reads, in one-letter code: Cytochrome P450 monooxygenase claQ (535 aa).

The next 2 helical transmembrane spans lie at 7 to 27 (IGTW…KLVG) and 225 to 245 (YFAI…NLPT). Cysteine 472 contributes to the heme binding site.

Belongs to the cytochrome P450 family. The cofactor is heme.

It localises to the membrane. It participates in secondary metabolite biosynthesis; terpenoid biosynthesis. Cytochrome P450 monooxygenase; part of the gene cluster that mediates the biosynthesis of clavilactone A, a meroterpenoid that features a unique benzo-fused ten-membered carbocyclic ring unit with an alpha,beta-epoxy-gamma-lactone moiety, forming an intriguing 10/5/3 tricyclic nested skeleton. Cytochrome P450 monooxygenases claO, claP, claQ, claU, and claW are close orthologs, suggesting that a redundant function or pseudogenes are present in the cla cluster. These monoxygenases are not involved in clavilactone A biosynthesis nor its modification. ClaR, ClaS and ClaT are sufficient to produce clavilactone A. The biosynthesis begins with the prenyltransferase claS that transfers geranyl pyrophosphate (GPP) to hydroquinone to produces geranylhydroquinone. The cytochrome P450 monooxygenase claR then catalyzes the diradical coupling reaction between the intramolecular hydroquinone and allyl moieties to form the benzo-fused ten-membered carbocyclic ring unit of wigantol. Finally the cytochrome P450 monooxygenase claT exquisitely and stereoselectively assembles the alpha,beta-epoxy-gamma-lactone moiety, producing clavilactone A via arnebinol A. In Ampulloclitocybe clavipes (Club foot), this protein is Cytochrome P450 monooxygenase claQ.